Here is a 462-residue protein sequence, read N- to C-terminus: tRNA modification GTPase MnmE (462 aa).

(6S)-5-formyl-5,6,7,8-tetrahydrofolate contacts are provided by Arg27, Glu89, and Arg128. Positions 224–383 constitute a TrmE-type G domain; that stretch reads GLATAIVGRP…LEAQIAKLFF (160 aa). A K(+)-binding site is contributed by Asn234. Residues 234-239, 253-259, and 278-281 each bind GTP; these read NVGKSS, TDVAGTT, and DTAG. Ser238 provides a ligand contact to Mg(2+). 3 residues coordinate K(+): Thr253, Val255, and Thr258. Thr259 lines the Mg(2+) pocket. Lys462 contributes to the (6S)-5-formyl-5,6,7,8-tetrahydrofolate binding site.

This sequence belongs to the TRAFAC class TrmE-Era-EngA-EngB-Septin-like GTPase superfamily. TrmE GTPase family. In terms of assembly, homodimer. Heterotetramer of two MnmE and two MnmG subunits. Requires K(+) as cofactor.

The protein localises to the cytoplasm. Exhibits a very high intrinsic GTPase hydrolysis rate. Involved in the addition of a carboxymethylaminomethyl (cmnm) group at the wobble position (U34) of certain tRNAs, forming tRNA-cmnm(5)s(2)U34. The chain is tRNA modification GTPase MnmE from Latilactobacillus sakei subsp. sakei (strain 23K) (Lactobacillus sakei subsp. sakei).